A 343-amino-acid polypeptide reads, in one-letter code: Anthranilate phosphoribosyltransferase (343 aa).

5-phospho-alpha-D-ribose 1-diphosphate-binding positions include glycine 81, 84–85, 91–94, 109–117, and serine 121; these read GD, NVST, and KHGNRSVSS. Residue glycine 81 participates in anthranilate binding. Residue serine 93 participates in Mg(2+) binding. An anthranilate-binding site is contributed by asparagine 112. Anthranilate is bound at residue arginine 167. Mg(2+) is bound by residues aspartate 226 and glutamate 227.

It belongs to the anthranilate phosphoribosyltransferase family. In terms of assembly, homodimer. It depends on Mg(2+) as a cofactor.

It carries out the reaction N-(5-phospho-beta-D-ribosyl)anthranilate + diphosphate = 5-phospho-alpha-D-ribose 1-diphosphate + anthranilate. The protein operates within amino-acid biosynthesis; L-tryptophan biosynthesis; L-tryptophan from chorismate: step 2/5. In terms of biological role, catalyzes the transfer of the phosphoribosyl group of 5-phosphorylribose-1-pyrophosphate (PRPP) to anthranilate to yield N-(5'-phosphoribosyl)-anthranilate (PRA). The protein is Anthranilate phosphoribosyltransferase of Chromohalobacter salexigens (strain ATCC BAA-138 / DSM 3043 / CIP 106854 / NCIMB 13768 / 1H11).